A 365-amino-acid chain; its full sequence is Caffeic acid 3-O-methyltransferase (365 aa).

Residue 130 to 136 (MNQDKVL) coordinates substrate. The tract at residues 162–180 (AFDYHGTDPRFNKVFNKGM) is substrate binding. 5 residues coordinate S-adenosyl-L-methionine: G208, D231, D251, M252, and K265. H269 acts as the Proton acceptor in catalysis.

It belongs to the class I-like SAM-binding methyltransferase superfamily. Cation-independent O-methyltransferase family. COMT subfamily. As to quaternary structure, homodimer.

The catalysed reaction is (E)-caffeate + S-adenosyl-L-methionine = (E)-ferulate + S-adenosyl-L-homocysteine + H(+). It participates in aromatic compound metabolism; phenylpropanoid biosynthesis. Catalyzes the conversion of caffeic acid to ferulic acid and of 5-hydroxyferulic acid to sinapic acid. The resulting products may subsequently be converted to the corresponding alcohols that are incorporated into lignins. This chain is Caffeic acid 3-O-methyltransferase (COMT1), found in Rosa chinensis (China rose).